The following is a 451-amino-acid chain: UDP-N-acetylmuramoylalanine--D-glutamate ligase (451 aa).

119-125 (GSNGKTT) provides a ligand contact to ATP.

This sequence belongs to the MurCDEF family.

The protein localises to the cytoplasm. The catalysed reaction is UDP-N-acetyl-alpha-D-muramoyl-L-alanine + D-glutamate + ATP = UDP-N-acetyl-alpha-D-muramoyl-L-alanyl-D-glutamate + ADP + phosphate + H(+). It functions in the pathway cell wall biogenesis; peptidoglycan biosynthesis. Its function is as follows. Cell wall formation. Catalyzes the addition of glutamate to the nucleotide precursor UDP-N-acetylmuramoyl-L-alanine (UMA). In Streptococcus agalactiae serotype Ia (strain ATCC 27591 / A909 / CDC SS700), this protein is UDP-N-acetylmuramoylalanine--D-glutamate ligase.